Here is a 220-residue protein sequence, read N- to C-terminus: 1-Cys peroxiredoxin A (220 aa).

Positions 4–165 (LTIGDTVPNL…VVRAVDALQT (162 aa)) constitute a Thioredoxin domain. Catalysis depends on C46, which acts as the Cysteine sulfenic acid (-SOH) intermediate. The Bipartite nuclear localization signal motif lies at 195–218 (KEKFPQGFDTADLPSGKGYLRFTK).

It belongs to the peroxiredoxin family. Prx6 subfamily.

It is found in the nucleus. The protein resides in the cytoplasm. The enzyme catalyses a hydroperoxide + [thioredoxin]-dithiol = an alcohol + [thioredoxin]-disulfide + H2O. Its function is as follows. Thiol-specific peroxidase that catalyzes the reduction of hydrogen peroxide and organic hydroperoxides to water and alcohols, respectively. Seems to contribute to the inhibition of germination during stress. The sequence is that of 1-Cys peroxiredoxin A from Oryza sativa subsp. japonica (Rice).